A 237-amino-acid polypeptide reads, in one-letter code: Cysteine-rich venom protein tigrin (237 aa).

The signal sequence occupies residues 1 to 18 (MIVFILLSLAAVLRQSFG). The region spanning 37 to 165 (VNIHNSFRRS…LYNYFYVCQY (129 aa)) is the SCP domain. 8 disulfides stabilise this stretch: Cys-74–Cys-152, Cys-91–Cys-166, Cys-147–Cys-163, Cys-185–Cys-192, Cys-188–Cys-197, Cys-201–Cys-232, Cys-210–Cys-226, and Cys-217–Cys-230. A ShKT domain is found at 201 to 232 (CTHKDDYNNCNSLVSDCQSDWDKSHCPATCFC).

Belongs to the CRISP family. In terms of tissue distribution, expressed by the venom gland.

It is found in the secreted. Functionally, this protein does not inhibit smooth muscle contraction elicited by high potassium levels or caffeine. The chain is Cysteine-rich venom protein tigrin from Rhabdophis tigrinus tigrinus (Tiger keelback snake).